The primary structure comprises 701 residues: Glycine--tRNA ligase beta subunit (701 aa).

Belongs to the class-II aminoacyl-tRNA synthetase family. Tetramer of two alpha and two beta subunits.

It localises to the cytoplasm. It catalyses the reaction tRNA(Gly) + glycine + ATP = glycyl-tRNA(Gly) + AMP + diphosphate. The chain is Glycine--tRNA ligase beta subunit from Anaeromyxobacter dehalogenans (strain 2CP-C).